Consider the following 919-residue polypeptide: UPF0182 protein Tery_4385 (919 aa).

Helical transmembrane passes span 6-26 (YIIIAISVILLVVFSLSRTLV), 52-72 (IFLWVGAFVIYFLFLWSNYWI), 96-116 (IFVKIIFLVNITLISLSAATA), 160-180 (WLFTLVFAGLIISIIVYALKG), 198-218 (THISLLLAGVTILIAVGFWFE), 243-263 (FAYWAMAIVALLLAVVCVLSV), and 268-288 (IIWPTYGIVIYIVLLGLFNVL).

It belongs to the UPF0182 family.

The protein resides in the cell membrane. This chain is UPF0182 protein Tery_4385, found in Trichodesmium erythraeum (strain IMS101).